Here is a 144-residue protein sequence, read N- to C-terminus: Methylglyoxal synthase (144 aa).

The MGS-like domain occupies 1–144; the sequence is MNIALIAHDE…EEEQRKFLTD (144 aa). Substrate-binding positions include H8, K12, 34–37, and 54–55; these read TGTT and SG. Residue D60 is the Proton donor/acceptor of the active site. H87 provides a ligand contact to substrate.

This sequence belongs to the methylglyoxal synthase family.

The catalysed reaction is dihydroxyacetone phosphate = methylglyoxal + phosphate. Its function is as follows. Catalyzes the formation of methylglyoxal from dihydroxyacetone phosphate. This is Methylglyoxal synthase from Exiguobacterium sibiricum (strain DSM 17290 / CCUG 55495 / CIP 109462 / JCM 13490 / 255-15).